Reading from the N-terminus, the 575-residue chain is Proline--tRNA ligase (575 aa).

Belongs to the class-II aminoacyl-tRNA synthetase family. ProS type 1 subfamily. In terms of assembly, homodimer.

The protein resides in the cytoplasm. The enzyme catalyses tRNA(Pro) + L-proline + ATP = L-prolyl-tRNA(Pro) + AMP + diphosphate. Its function is as follows. Catalyzes the attachment of proline to tRNA(Pro) in a two-step reaction: proline is first activated by ATP to form Pro-AMP and then transferred to the acceptor end of tRNA(Pro). As ProRS can inadvertently accommodate and process non-cognate amino acids such as alanine and cysteine, to avoid such errors it has two additional distinct editing activities against alanine. One activity is designated as 'pretransfer' editing and involves the tRNA(Pro)-independent hydrolysis of activated Ala-AMP. The other activity is designated 'posttransfer' editing and involves deacylation of mischarged Ala-tRNA(Pro). The misacylated Cys-tRNA(Pro) is not edited by ProRS. The chain is Proline--tRNA ligase from Solidesulfovibrio magneticus (strain ATCC 700980 / DSM 13731 / RS-1) (Desulfovibrio magneticus).